The chain runs to 517 residues: T-complex protein 11-like protein 2 (517 aa).

The interval 1–59 (MPFNGEKQYVNEDQQSDSESSRFSESTASLSDYGCSRQSFTSDSSSKSSSPASTSPPRG) is disordered. Serine 16 carries the phosphoserine modification. Over residues 17–55 (DSESSRFSESTASLSDYGCSRQSFTSDSSSKSSSPASTS) the composition is skewed to low complexity.

It belongs to the TCP11 family. Interacts with FMNL2; this interaction promotes muscle-derived satellite cell (MDSC) migration and differentiation.

The protein localises to the cytoplasm. The protein resides in the cytoskeleton. In terms of biological role, promotes the migration of muscle-derived satellite cells (MDSCs) during differentiation throught interaction with FMNL2 and therefore may participate in microfilament assembly. In Rattus norvegicus (Rat), this protein is T-complex protein 11-like protein 2.